We begin with the raw amino-acid sequence, 568 residues long: 2-succinyl-5-enolpyruvyl-6-hydroxy-3-cyclohexene-1-carboxylate synthase (568 aa).

Belongs to the TPP enzyme family. MenD subfamily. As to quaternary structure, homodimer. Mg(2+) serves as cofactor. Requires Mn(2+) as cofactor. Thiamine diphosphate is required as a cofactor.

It carries out the reaction isochorismate + 2-oxoglutarate + H(+) = 5-enolpyruvoyl-6-hydroxy-2-succinyl-cyclohex-3-ene-1-carboxylate + CO2. Its pathway is quinol/quinone metabolism; 1,4-dihydroxy-2-naphthoate biosynthesis; 1,4-dihydroxy-2-naphthoate from chorismate: step 2/7. It functions in the pathway quinol/quinone metabolism; menaquinone biosynthesis. Its function is as follows. Catalyzes the thiamine diphosphate-dependent decarboxylation of 2-oxoglutarate and the subsequent addition of the resulting succinic semialdehyde-thiamine pyrophosphate anion to isochorismate to yield 2-succinyl-5-enolpyruvyl-6-hydroxy-3-cyclohexene-1-carboxylate (SEPHCHC). This is 2-succinyl-5-enolpyruvyl-6-hydroxy-3-cyclohexene-1-carboxylate synthase from Histophilus somni (strain 129Pt) (Haemophilus somnus).